A 101-amino-acid chain; its full sequence is Interleukin-8 (101 aa).

The signal sequence occupies residues 1–22 (MTSKLAVALLAAFLLSAALCEA). Cystine bridges form between cysteine 34-cysteine 61 and cysteine 36-cysteine 77.

Belongs to the intercrine alpha (chemokine CxC) family. As to quaternary structure, homodimer. Interacts with TNFAIP6 (via Link domain); this interaction interferes with chemokine binding to glycosaminoglycans.

The protein localises to the secreted. In terms of biological role, chemotactic factor that mediates inflammatory response by attracting neutrophils, basophils, and T-cells to clear pathogens and protect the host from infection. Also plays an important role in neutrophil activation. Released in response to an inflammatory stimulus, exerts its effect by binding to the G-protein-coupled receptors CXCR1 and CXCR2, primarily found in neutrophils, monocytes and endothelial cells. G-protein heterotrimer (alpha, beta, gamma subunits) constitutively binds to CXCR1/CXCR2 receptor and activation by IL8 leads to beta and gamma subunits release from Galpha (GNAI2 in neutrophils) and activation of several downstream signaling pathways including PI3K and MAPK pathways. The protein is Interleukin-8 (CXCL8) of Bos taurus (Bovine).